We begin with the raw amino-acid sequence, 352 residues long: DNA polymerase IV (352 aa).

Residues 7-187 (IIHIDMDCFY…LSLKKIPGIG (181 aa)) form the UmuC domain. Mg(2+)-binding residues include aspartate 11 and aspartate 105. Glutamate 106 is an active-site residue.

Belongs to the DNA polymerase type-Y family. Monomer. Mg(2+) serves as cofactor.

The protein localises to the cytoplasm. The enzyme catalyses DNA(n) + a 2'-deoxyribonucleoside 5'-triphosphate = DNA(n+1) + diphosphate. Functionally, poorly processive, error-prone DNA polymerase involved in untargeted mutagenesis. Copies undamaged DNA at stalled replication forks, which arise in vivo from mismatched or misaligned primer ends. These misaligned primers can be extended by PolIV. Exhibits no 3'-5' exonuclease (proofreading) activity. May be involved in translesional synthesis, in conjunction with the beta clamp from PolIII. This Colwellia psychrerythraea (strain 34H / ATCC BAA-681) (Vibrio psychroerythus) protein is DNA polymerase IV.